Consider the following 134-residue polypeptide: Putative membrane protein insertion efficiency factor (134 aa).

The protein belongs to the UPF0161 family.

The protein localises to the cell inner membrane. Could be involved in insertion of integral membrane proteins into the membrane. The protein is Putative membrane protein insertion efficiency factor of Rhizobium etli (strain ATCC 51251 / DSM 11541 / JCM 21823 / NBRC 15573 / CFN 42).